Here is a 428-residue protein sequence, read N- to C-terminus: Elongation factor 1-alpha (428 aa).

In terms of domain architecture, tr-type G spans 5–217 (KPHVNIVFIG…DQIPEPEKPI (213 aa)). The interval 14-21 (GHVDHGKS) is G1. Residue 14–21 (GHVDHGKS) participates in GTP binding. Mg(2+) is bound at residue Ser21. A G2 region spans residues 68-72 (GITID). The interval 89–92 (DAPG) is G3. Residues 89 to 93 (DAPGH) and 144 to 147 (NKMD) each bind GTP. The interval 144 to 147 (NKMD) is G4. A G5 region spans residues 181-183 (SAW).

Belongs to the TRAFAC class translation factor GTPase superfamily. Classic translation factor GTPase family. EF-Tu/EF-1A subfamily.

Its subcellular location is the cytoplasm. The enzyme catalyses GTP + H2O = GDP + phosphate + H(+). Functionally, GTP hydrolase that promotes the GTP-dependent binding of aminoacyl-tRNA to the A-site of ribosomes during protein biosynthesis. The chain is Elongation factor 1-alpha from Pyrococcus horikoshii (strain ATCC 700860 / DSM 12428 / JCM 9974 / NBRC 100139 / OT-3).